The following is a 181-amino-acid chain: Cyclic phosphodiesterase (181 aa).

Catalysis depends on histidine 42, which acts as the Proton donor/acceptor. A substrate-binding site is contributed by threonine 44. 2 disulfide bridges follow: cysteine 64–cysteine 177 and cysteine 104–cysteine 110. Histidine 119 acts as the Proton donor/acceptor in catalysis. 2 residues coordinate substrate: serine 121 and tyrosine 124.

Belongs to the 2H phosphoesterase superfamily. CPD1 family. Expressed in leaves, stems, roots, floral buds and germinating seeds.

The protein resides in the cytoplasm. The catalysed reaction is ADP-alpha-D-ribose 1'',2''-cyclic phosphate + H2O = ADP-alpha-D-ribose 1''-phosphate + H(+). It catalyses the reaction 2',3'-cyclophospho-AMP + H2O = adenosine 2'-phosphate + H(+). It carries out the reaction 2',3'-cyclophospho-GMP + H2O = guanosine 2'-phosphate + H(+). The enzyme catalyses 2',3'-cyclophospho-UMP + H2O = uridine 2'-phosphate + H(+). The catalysed reaction is 2',3'-cyclophospho-CMP + H2O = cytidine 2'-phosphate + H(+). With respect to regulation, inhibited by Cu(2+) and Zn(2+) at 0.5 mM by 93 and 87% respectively. Not inhibited by Ca(2+), Mg(2+), Co(2+), Ni(2+), and EDTA at 0.5 mM. In terms of biological role, hydrolyzes ADP-ribose 1'',2''-cyclic phosphate (Appr&gt;1) that is produced during tRNA splicing into ADP-ribose 1''-phosphate (Appr-1''p). Also acts on nucleoside 2',3'-cyclic phosphates. The polypeptide is Cyclic phosphodiesterase (Arabidopsis thaliana (Mouse-ear cress)).